The sequence spans 95 residues: Co-chaperonin GroES (95 aa).

This sequence belongs to the GroES chaperonin family. Heptamer of 7 subunits arranged in a ring. Interacts with the chaperonin GroEL.

It localises to the cytoplasm. Functionally, together with the chaperonin GroEL, plays an essential role in assisting protein folding. The GroEL-GroES system forms a nano-cage that allows encapsulation of the non-native substrate proteins and provides a physical environment optimized to promote and accelerate protein folding. GroES binds to the apical surface of the GroEL ring, thereby capping the opening of the GroEL channel. The polypeptide is Co-chaperonin GroES (Marinobacter nauticus (strain ATCC 700491 / DSM 11845 / VT8) (Marinobacter aquaeolei)).